The chain runs to 95 residues: MSDPLRELFDVIEDRKETMPENSYTASLLADDEKGENAALEKVGEEATEFLLAAKDGDTDELAHEGADVVYHMLVVLAQQDMDVEALLAELDDRR.

The protein belongs to the PRA-PH family.

It is found in the cytoplasm. It catalyses the reaction 1-(5-phospho-beta-D-ribosyl)-ATP + H2O = 1-(5-phospho-beta-D-ribosyl)-5'-AMP + diphosphate + H(+). Its pathway is amino-acid biosynthesis; L-histidine biosynthesis; L-histidine from 5-phospho-alpha-D-ribose 1-diphosphate: step 2/9. This Halobacterium salinarum (strain ATCC 29341 / DSM 671 / R1) protein is Phosphoribosyl-ATP pyrophosphatase.